A 1383-amino-acid chain; its full sequence is DNA-directed RNA polymerase subunit beta (1383 aa).

Belongs to the RNA polymerase beta chain family. In terms of assembly, the RNAP catalytic core consists of 2 alpha, 1 beta, 1 beta' and 1 omega subunit. When a sigma factor is associated with the core the holoenzyme is formed, which can initiate transcription.

It catalyses the reaction RNA(n) + a ribonucleoside 5'-triphosphate = RNA(n+1) + diphosphate. Its function is as follows. DNA-dependent RNA polymerase catalyzes the transcription of DNA into RNA using the four ribonucleoside triphosphates as substrates. The protein is DNA-directed RNA polymerase subunit beta of Anaplasma phagocytophilum (strain HZ).